The primary structure comprises 452 residues: Probable cytosolic iron-sulfur protein assembly protein 1 (452 aa).

Residues 1-12 (MPPPTTPTPNPS) show a composition bias toward pro residues. Positions 1 to 24 (MPPPTTPTPNPSIPQKATLTPLPP) are disordered. WD repeat units follow at residues 70–121 (GHAR…DAAA), 161–200 (GHENEVKSLAFSPGGQYLATSSRDKSVWIWEDVSSGQGGD), 213–267 (EHDG…EWVC), 273–319 (GHGG…FGGV), 340–379 (VHTRDVYSVSWSADTGLVASTGSDGIIAVYAEESAPEDVA), and 411–452 (YEVN…VRIS).

The protein belongs to the WD repeat CIA1 family.

In terms of biological role, essential component of the cytosolic iron-sulfur (Fe/S) protein assembly machinery. Required for the maturation of extramitochondrial Fe/S proteins. The sequence is that of Probable cytosolic iron-sulfur protein assembly protein 1 from Chaetomium globosum (strain ATCC 6205 / CBS 148.51 / DSM 1962 / NBRC 6347 / NRRL 1970) (Soil fungus).